The primary structure comprises 186 residues: MNVSKYVAIFFFVFIQLISVGKVFANADEWMTTFRENIAQTWQQPEHYDLYIPAITWHARFAYDKEKTDRYNERPWGGGFGQSRWDEKGNWHGLYAMAFKDSWNKWEPIAGYGWESTWRPLADENFHLGLGFTAGVTARDNWNYIPLPVLLPLASVGYGPATFQMTYIPGTYNNGNVYFAWMRFQF.

The first 25 residues, 1 to 25 (MNVSKYVAIFFFVFIQLISVGKVFA), serve as a signal peptide directing secretion. Active-site residues include H58, D101, and S102.

It belongs to the lipid A palmitoyltransferase family. As to quaternary structure, homodimer.

Its subcellular location is the cell outer membrane. It catalyses the reaction lipid A (E. coli) + a 1-hexadecanoyl-2-acyl-sn-glycero-3-phosphocholine = hepta-acyl lipid A (E. coli) + a 2-acyl-sn-glycero-3-phosphocholine. The catalysed reaction is lipid IIA + a 1-hexadecanoyl-2-acyl-sn-glycero-3-phosphocholine = lipid IIB + a 2-acyl-sn-glycero-3-phosphocholine. It carries out the reaction lipid IVA (E. coli) + a 1-hexadecanoyl-2-acyl-sn-glycero-3-phosphocholine = lipid IVB (E. coli) + a 2-acyl-sn-glycero-3-phosphocholine. In terms of biological role, transfers a palmitate residue from the sn-1 position of a phospholipid to the N-linked hydroxymyristate on the proximal unit of lipid A or its precursors. This is Lipid A palmitoyltransferase PagP from Escherichia coli O6:H1 (strain CFT073 / ATCC 700928 / UPEC).